Consider the following 311-residue polypeptide: Cell division protein ZipA (311 aa).

Residues 1 to 5 (MQELR) are Periplasmic-facing. The helical transmembrane segment at 6–26 (FVLIVVGALAIMALLFHGLWT) threads the bilayer. At 27–311 (SKKEGKAKFG…QIVEFKAANA (285 aa)) the chain is on the cytoplasmic side. Residues 32-54 (KAKFGDKPLSKLDLGESEPKESE) are compositionally biased toward basic and acidic residues. The tract at residues 32–60 (KAKFGDKPLSKLDLGESEPKESEMYVAPE) is disordered.

It belongs to the ZipA family. In terms of assembly, interacts with FtsZ via their C-terminal domains.

The protein localises to the cell inner membrane. Essential cell division protein that stabilizes the FtsZ protofilaments by cross-linking them and that serves as a cytoplasmic membrane anchor for the Z ring. Also required for the recruitment to the septal ring of downstream cell division proteins. The sequence is that of Cell division protein ZipA from Vibrio vulnificus (strain YJ016).